A 584-amino-acid polypeptide reads, in one-letter code: 2-succinyl-5-enolpyruvyl-6-hydroxy-3-cyclohexene-1-carboxylate synthase (584 aa).

It belongs to the TPP enzyme family. MenD subfamily. In terms of assembly, homodimer. The cofactor is Mg(2+). Requires Mn(2+) as cofactor. Thiamine diphosphate serves as cofactor.

The enzyme catalyses isochorismate + 2-oxoglutarate + H(+) = 5-enolpyruvoyl-6-hydroxy-2-succinyl-cyclohex-3-ene-1-carboxylate + CO2. It functions in the pathway quinol/quinone metabolism; 1,4-dihydroxy-2-naphthoate biosynthesis; 1,4-dihydroxy-2-naphthoate from chorismate: step 2/7. It participates in quinol/quinone metabolism; menaquinone biosynthesis. Catalyzes the thiamine diphosphate-dependent decarboxylation of 2-oxoglutarate and the subsequent addition of the resulting succinic semialdehyde-thiamine pyrophosphate anion to isochorismate to yield 2-succinyl-5-enolpyruvyl-6-hydroxy-3-cyclohexene-1-carboxylate (SEPHCHC). The chain is 2-succinyl-5-enolpyruvyl-6-hydroxy-3-cyclohexene-1-carboxylate synthase from Bacillus thuringiensis (strain Al Hakam).